A 359-amino-acid polypeptide reads, in one-letter code: Outer membrane protein P2 (359 aa).

The N-terminal stretch at 1–20 (MKKTLAALIVGAFAASAANA) is a signal peptide.

Belongs to the Gram-negative porin family. Homotrimer.

It localises to the cell outer membrane. In terms of biological role, forms pores that allow passive diffusion of small molecules across the outer membrane. This chain is Outer membrane protein P2 (ompP2), found in Haemophilus influenzae (strain ATCC 51907 / DSM 11121 / KW20 / Rd).